The primary structure comprises 511 residues: E3 ubiquitin-protein ligase TRIM7 (511 aa).

The segment at 29–82 (CSICLELFREPVSVECGHSFCRACIGRCWERPGAGSVGAATRAPPFPLPCPQCR) adopts an RING-type zinc-finger fold. A Phosphoserine; by RPS6KA5 modification is found at S107. Residues 125-166 (AAAARCGQHGEPFKLYCQDDGRAICVVCDRAREHREHAVLPL) form a B box-type zinc finger. Residues C130, H133, C152, and H158 each coordinate Zn(2+). Residues 166 to 263 (LDEAVQEAKE…AQLGVEITQL (98 aa)) adopt a coiled-coil conformation. Residues 324 to 511 (MLKKFKEDLR…STGTYLRIWP (188 aa)) enclose the B30.2/SPRY domain.

This sequence belongs to the TRIM/RBCC family. As to quaternary structure, forms homodimers. Interacts with GNIP2. Interacts with GYG1. Interacts with RNF187 (via C-terminus). Post-translationally, phosphorylated at Ser-107 by RPS6KA5/MSK1, which stimulates the ubiquitin ligase activity. In terms of processing, auto-ubiquitinates via 'Lys-63'-linked polyubiquitination. As to expression, skeletal muscle and placenta, at lower levels in heart, brain and pancreas. Isoform 1 is widely expressed with high level in testis, kidney and heart.

The protein localises to the nucleus. It is found in the cytoplasm. Its subcellular location is the golgi apparatus. The catalysed reaction is S-ubiquitinyl-[E2 ubiquitin-conjugating enzyme]-L-cysteine + [acceptor protein]-L-lysine = [E2 ubiquitin-conjugating enzyme]-L-cysteine + N(6)-ubiquitinyl-[acceptor protein]-L-lysine.. It participates in protein modification; protein ubiquitination. In terms of biological role, E3 ubiquitin-protein ligase that have both tumor-promoting and tumor-suppressing activities and functions in several biological processes including innate immunity, regulation of ferroptosis as well as cell proliferation and migration. Acts as an antiviral effector against multiple viruses by targeting specific viral proteins for ubiquitination and degradation including norovirus NTPase protein or SARS-CoV-2 NSP5 and NSP8 proteins. Mechanistically, recognizes the C-terminal glutamine-containing motif usually generated by viral proteases that process the polyproteins and trigger their ubiquitination and subsequent degradation. Mediates 'Lys-63'-linked polyubiquitination and stabilization of the JUN coactivator RNF187 in response to growth factor signaling via the MEK/ERK pathway, thereby regulating JUN transactivation and cellular proliferation. Promotes the TLR4-mediated signaling activation through its E3 ligase domain leading to production of pro-inflammatory cytokines and type I interferon. Also plays a negative role in the regulation of exogenous cytosolic DNA virus-triggered immune response. Mechanistically, enhances the 'Lys-48'-linked ubiquitination of STING1 leading to its proteasome-dependent degradation. Mediates the ubiquitination of the SIN3-HDAC chromatin remodeling complex component BRMS1. Modulates NCOA4-mediated ferritinophagy and ferroptosis in glioblastoma cells by ubiquitinating NCOA4, leading to its degradation. Functionally, (Microbial infection) Promotes Zika virus replication by mediating envelope protein E ubiquitination. The chain is E3 ubiquitin-protein ligase TRIM7 (TRIM7) from Homo sapiens (Human).